A 214-amino-acid polypeptide reads, in one-letter code: QETSAKLADTEETLQETSAKLADTEETLQETSAKLADTEETLQETSAKLADTEETLSAEIASLAEQHGVAQTLCEQQGAYMNQLLTYVRAAYNVTLDGMTEVQATAVADILRQCDYALRSVAQAASDEVEHVKEMYNMVDGNYKETAARFDILRRILGKIDQDVKEASVEIDAPERRQTCSLHPTPRRLGDVSNRENSIENKTRSASRLSGRLF.

Tandem repeats lie at residues 1 to 14 (QETSAKLADTEETL), 15 to 28 (QETSAKLADTEETL), 29 to 42 (QETSAKLADTEETL), and 43 to 56 (QETSAKLADTEETL). Positions 1 to 31 (QETSAKLADTEETLQETSAKLADTEETLQET) are disordered. The tract at residues 1 to 56 (QETSAKLADTEETLQETSAKLADTEETLQETSAKLADTEETLQETSAKLADTEETL) is 4 X 14 AA tandem repeats. The disordered stretch occupies residues 180–214 (CSLHPTPRRLGDVSNRENSIENKTRSASRLSGRLF). Over residues 188 to 203 (RLGDVSNRENSIENKT) the composition is skewed to basic and acidic residues.

The protein resides in the membrane. In Leishmania major, this protein is Membrane antigen containing repeating peptides.